The following is a 912-amino-acid chain: MASLIEKLLRTGDKKTLRQLRNYADSINALESSFQTFTDAELREETDRLRERHQDGEKLDDLLPEAFAAVREASSRTLGMRHFDVQLMGGAALHLGNIAEMKTGEGKTLVATAPAYLNALTGNGVHVITVNDYLAEYQSDLMGRVYRFLGLTSGCILSNQDPAVRREQYAADITYGTNNEFGFDYLRDNMAWDKSELVQRGHHFAIVDEVDSILIDEARTPLIISGPAQGDTNRWYSEFAKVVTRLKPDEDYEVDEKKRTVGVLEGGIEKVEDYLGIHNLYESANTPLIGFLNNAIKAKELFKRDKDYVILDGEVLIVDEHTGRILAGRRYNEGMHQAIEAKEGVEIKAENQTLATVTLQNYFRMYNKLSGMTGTAETEAAEFMSTYKLGVVAIPTNRDMQRIDQPDLVYKNEAVKFDAVVKDIAERHEKGQPVLVGTTSVEKSEYLSRLLAKEGIRHEVLNAKNHAREAAIVAQAGRKGAVTVATNMAGRGTDIMLGGNAEFTAVAELAAKGLDPEENSEEYEAAWPAAFEAAKQAVKDEHEEVLELGGLYVLGTERHESRRIDNQLRGRSGRQGDPGESRFYLSLTDDLMRLFNSGAAERLMNSSVPDDVALESKLVSRAIASAQGQVEGRNAEQRKNVLKYDDVLNRQREAIYGDRRRILEGDDLHEKVQFFLEDTITALIDAATSEGTGDDWDFNQLWTNLKTLYPVSVTSHDVIDEAGGKSRITVDFLKEEILSDARLVYQAREQAIGSESMRELERRVVLSVIGRKWQEHLYEMDYLKEGIGLRAMAQRDPLVEYQREGFIMFQAMMEAIREESVGFLFNLEVEVTPAEDVVVADGAGEHTEHHEPQIHAAGLEAPEKPAQLQYTAPGEDGASQTRVEGRSSGRSGNPAKAAQDGARKPAPKKKKR.

Residues Q86, 104-108 (GEGKT), and D494 contribute to the ATP site. Residues 860–912 (EAPEKPAQLQYTAPGEDGASQTRVEGRSSGRSGNPAKAAQDGARKPAPKKKKR) form a disordered region.

The protein belongs to the SecA family. Monomer and homodimer. Part of the essential Sec protein translocation apparatus which comprises SecA, SecYEG and auxiliary proteins SecDF. Other proteins may also be involved.

Its subcellular location is the cell membrane. The protein resides in the cytoplasm. The enzyme catalyses ATP + H2O + cellular proteinSide 1 = ADP + phosphate + cellular proteinSide 2.. In terms of biological role, part of the Sec protein translocase complex. Interacts with the SecYEG preprotein conducting channel. Has a central role in coupling the hydrolysis of ATP to the transfer of proteins into and across the cell membrane, serving as an ATP-driven molecular motor driving the stepwise translocation of polypeptide chains across the membrane. In Arthrobacter sp. (strain FB24), this protein is Protein translocase subunit SecA.